The following is a 356-amino-acid chain: UDP-N-acetylglucosamine--N-acetylmuramyl-(pentapeptide) pyrophosphoryl-undecaprenol N-acetylglucosamine transferase (356 aa).

UDP-N-acetyl-alpha-D-glucosamine-binding residues include Arg166, Ser196, and Gln290.

Belongs to the glycosyltransferase 28 family. MurG subfamily.

The protein localises to the cell membrane. The catalysed reaction is Mur2Ac(oyl-L-Ala-gamma-D-Glu-L-Lys-D-Ala-D-Ala)-di-trans,octa-cis-undecaprenyl diphosphate + UDP-N-acetyl-alpha-D-glucosamine = beta-D-GlcNAc-(1-&gt;4)-Mur2Ac(oyl-L-Ala-gamma-D-Glu-L-Lys-D-Ala-D-Ala)-di-trans,octa-cis-undecaprenyl diphosphate + UDP + H(+). The protein operates within cell wall biogenesis; peptidoglycan biosynthesis. Cell wall formation. Catalyzes the transfer of a GlcNAc subunit on undecaprenyl-pyrophosphoryl-MurNAc-pentapeptide (lipid intermediate I) to form undecaprenyl-pyrophosphoryl-MurNAc-(pentapeptide)GlcNAc (lipid intermediate II). In Staphylococcus aureus (strain Mu3 / ATCC 700698), this protein is UDP-N-acetylglucosamine--N-acetylmuramyl-(pentapeptide) pyrophosphoryl-undecaprenol N-acetylglucosamine transferase.